Reading from the N-terminus, the 250-residue chain is NADH-quinone oxidoreductase subunit C (250 aa).

The protein belongs to the complex I 30 kDa subunit family. NDH-1 is composed of 14 different subunits. Subunits NuoB, C, D, E, F, and G constitute the peripheral sector of the complex.

The protein resides in the cell inner membrane. It carries out the reaction a quinone + NADH + 5 H(+)(in) = a quinol + NAD(+) + 4 H(+)(out). NDH-1 shuttles electrons from NADH, via FMN and iron-sulfur (Fe-S) centers, to quinones in the respiratory chain. The immediate electron acceptor for the enzyme in this species is believed to be ubiquinone. Couples the redox reaction to proton translocation (for every two electrons transferred, four hydrogen ions are translocated across the cytoplasmic membrane), and thus conserves the redox energy in a proton gradient. The sequence is that of NADH-quinone oxidoreductase subunit C from Xylella fastidiosa (strain M23).